The primary structure comprises 181 residues: Malignant T-cell-amplified sequence 2 (181 aa).

The PUA domain maps to 92-171 (LPHQQVDKGA…IGIENIHYLN (80 aa)).

This sequence belongs to the MCTS1 family.

The protein resides in the cytoplasm. This is Malignant T-cell-amplified sequence 2 from Homo sapiens (Human).